A 390-amino-acid polypeptide reads, in one-letter code: MPHTAKILLLGSGELGREFVISAKRLGAYVVACDAYAAAPAMQVADASEVLSMLDADALRAVVAKHHPDYVVPEIEAIRTEVLAEIEADGFNVVPSAYATQMTMNRDAIRDLAAQELGITTSRYRYAKNLEEVRAAAEFTGYPCVIKPVMSSSGKGQSTVRSADKLEEAWDYAVANMRGDRKRVIVEQFIDFDYEITLLTVRHKDGITFCPPIGHRQERGDYRESWQPATMSKPAIAAAQEMAEKVVTALQGNGKGFGLFGVEFFVKGEEVIFSELSPRPHDTGMVTSVSQNLSEFDLHARAIMGLHVPSEILARPSASAVILAEQESETVSYSGLAAAMEGGADIRIFGKPNTRPYRRMGVALATGGDTDYARTAAVAAANKLHIHYGD.

Residues 14 to 15 (EL) and Glu-74 contribute to the N(1)-(5-phospho-beta-D-ribosyl)glycinamide site. ATP contacts are provided by residues Arg-106, Lys-147, 152 to 157 (SSGKGQ), 187 to 190 (EQFI), and Glu-195. Residues 111-304 (DLAAQELGIT…EFDLHARAIM (194 aa)) form the ATP-grasp domain. Glu-263 and Glu-275 together coordinate Mg(2+). N(1)-(5-phospho-beta-D-ribosyl)glycinamide contacts are provided by residues Asp-282, Lys-351, and 358–359 (RR).

It belongs to the PurK/PurT family. In terms of assembly, homodimer.

The enzyme catalyses N(1)-(5-phospho-beta-D-ribosyl)glycinamide + formate + ATP = N(2)-formyl-N(1)-(5-phospho-beta-D-ribosyl)glycinamide + ADP + phosphate + H(+). Its pathway is purine metabolism; IMP biosynthesis via de novo pathway; N(2)-formyl-N(1)-(5-phospho-D-ribosyl)glycinamide from N(1)-(5-phospho-D-ribosyl)glycinamide (formate route): step 1/1. Functionally, involved in the de novo purine biosynthesis. Catalyzes the transfer of formate to 5-phospho-ribosyl-glycinamide (GAR), producing 5-phospho-ribosyl-N-formylglycinamide (FGAR). Formate is provided by PurU via hydrolysis of 10-formyl-tetrahydrofolate. The sequence is that of Formate-dependent phosphoribosylglycinamide formyltransferase from Erythrobacter litoralis (strain HTCC2594).